The sequence spans 485 residues: Noelin (485 aa).

Residues 1–16 (MSVPLLKIGVVLSTMA) form the signal peptide. N-linked (GlcNAc...) asparagine glycans are attached at residues Asn-33, Asn-103, Asn-187, Asn-288, Asn-307, Asn-394, Asn-431, and Asn-473. Residues 87-227 (RDARTKQLRQ…LRACMQKLAC (141 aa)) are a coiled coil. Residues 226-478 (ACGKLTGISD…QTLYNVTLFH (253 aa)) enclose the Olfactomedin-like domain. Cys-227 and Cys-409 are oxidised to a cystine. The Endoplasmic reticulum retention signal signature appears at 482 to 485 (SDEL).

In terms of assembly, homotetramer; disulfide-linked. Dimer of dimers, giving rise to a V-shaped homotretramer. Isoform 1 and isoform 3 interact with RTN4R. Identified in a complex with RTN4R and LINGO1. Peripherally associated with AMPAR complex. AMPAR complex consists of an inner core made of 4 pore-forming GluA/GRIA proteins (GRIA1, GRIA2, GRIA3 and GRIA4) and 4 major auxiliary subunits arranged in a twofold symmetry. One of the two pairs of distinct binding sites is occupied either by CNIH2, CNIH3 or CACNG2, CACNG3. The other harbors CACNG2, CACNG3, CACNG4, CACNG8 or GSG1L. This inner core of AMPAR complex is complemented by outer core constituents binding directly to the GluA/GRIA proteins at sites distinct from the interaction sites of the inner core constituents. Outer core constituents include at least PRRT1, PRRT2, CKAMP44/SHISA9, FRRS1L and NRN1. The proteins of the inner and outer core serve as a platform for other, more peripherally associated AMPAR constituents, including OLFM1. Alone or in combination, these auxiliary subunits control the gating and pharmacology of the AMPAR complex and profoundly impact their biogenesis and protein processing. Interacts with OLFM2. Interacts with DTNB. As to expression, expressed in the brain cortex, olfactory bulb and vomeronasal neuroepithelium (at protein level). Detected in brain cortex, hippocampus, dorsal root ganglion and olfactory bulb.

The protein resides in the secreted. The protein localises to the synapse. Its subcellular location is the endoplasmic reticulum. It localises to the cell projection. It is found in the axon. The protein resides in the perikaryon. Functionally, contributes to the regulation of axonal growth in the embryonic and adult central nervous system by inhibiting interactions between RTN4R and LINGO1. Inhibits RTN4R-mediated axon growth cone collapse. May play an important role in regulating the production of neural crest cells by the neural tube. May be required for normal responses to olfactory stimuli. In Mus musculus (Mouse), this protein is Noelin (Olfm1).